The following is a 188-amino-acid chain: Elongation factor P (188 aa).

Belongs to the elongation factor P family.

The protein localises to the cytoplasm. The protein operates within protein biosynthesis; polypeptide chain elongation. Involved in peptide bond synthesis. Stimulates efficient translation and peptide-bond synthesis on native or reconstituted 70S ribosomes in vitro. Probably functions indirectly by altering the affinity of the ribosome for aminoacyl-tRNA, thus increasing their reactivity as acceptors for peptidyl transferase. In Wolbachia pipientis subsp. Culex pipiens (strain wPip), this protein is Elongation factor P.